A 273-amino-acid polypeptide reads, in one-letter code: Undecaprenyl-diphosphatase (273 aa).

A run of 7 helical transmembrane segments spans residues 6–26 (SLLI…LPVS), 45–65 (AKTF…VMFW), 90–110 (LTLI…LVFH), 116–136 (LFNP…LIAA), 190–210 (YAAS…ATVL), 222–242 (ADIP…LIAI), and 252–272 (ISFI…YVVF).

Belongs to the UppP family.

It is found in the cell inner membrane. It catalyses the reaction di-trans,octa-cis-undecaprenyl diphosphate + H2O = di-trans,octa-cis-undecaprenyl phosphate + phosphate + H(+). In terms of biological role, catalyzes the dephosphorylation of undecaprenyl diphosphate (UPP). Confers resistance to bacitracin. This chain is Undecaprenyl-diphosphatase, found in Salmonella heidelberg (strain SL476).